The chain runs to 431 residues: PHD finger-containing protein 1 (431 aa).

The PHD-type zinc-finger motif lies at 7–59; it reads GPVCQTCGDIGFEEALVFCDSCMFESIHRYCLGITPIPFTEYITWICEDCDNS. Zn(2+) contacts are provided by Cys-10, Cys-13, Cys-25, Cys-28, His-34, Cys-37, Cys-53, and Cys-56. Positions 125–221 are disordered; sequence EAADSSSVPD…QESSDSRKPH (97 aa). Residues 128–139 show a composition bias toward polar residues; it reads DSSSVPDHSSCT. The segment covering 160 to 171 has biased composition (basic residues); sequence KKKKKKKKKKSI. The span at 191–202 shows a compositional bias: low complexity; it reads VVEPVEVSSSSP. Basic and acidic residues predominate over residues 205-221; the sequence is ETMESKRQESSDSRKPH.

As to quaternary structure, interacts directly with AIPP3/BDT1.

In terms of biological role, together with AIPP3/BDT1, cooperates to form a BAH-PHD bivalent histone reader complex able to read histone H3 lysine 27 trimethylation (H3K27me3) histone marks in order to regulate transcription, especially to prevent early flowering; promotes AIPP3/BDT1 binding to H3K27me3. This is PHD finger-containing protein 1 from Arabidopsis thaliana (Mouse-ear cress).